The sequence spans 278 residues: Phosphatidylglycerol--prolipoprotein diacylglyceryl transferase (278 aa).

3 consecutive transmembrane segments (helical) span residues 21-41 (WYGIIIAMGILLGYFIAQASV), 54-74 (IIFWSAIFGFIIARIYFVIFQ), and 88-108 (IWQGGIAIHGGLIGGFVTGII). Arg-136 serves as a coordination point for a 1,2-diacyl-sn-glycero-3-phospho-(1'-sn-glycerol). 3 helical membrane-spanning segments follow: residues 176 to 196 (QPTFLYESIWDVLGFVILILL), 202 to 222 (IGDTFCLYLIWYSIGRFFVEG), and 234 to 254 (IRIAQLMSIILIIIGVVIMIV).

The protein belongs to the Lgt family.

It is found in the cell membrane. The catalysed reaction is L-cysteinyl-[prolipoprotein] + a 1,2-diacyl-sn-glycero-3-phospho-(1'-sn-glycerol) = an S-1,2-diacyl-sn-glyceryl-L-cysteinyl-[prolipoprotein] + sn-glycerol 1-phosphate + H(+). It functions in the pathway protein modification; lipoprotein biosynthesis (diacylglyceryl transfer). Functionally, catalyzes the transfer of the diacylglyceryl group from phosphatidylglycerol to the sulfhydryl group of the N-terminal cysteine of a prolipoprotein, the first step in the formation of mature lipoproteins. This Staphylococcus saprophyticus subsp. saprophyticus (strain ATCC 15305 / DSM 20229 / NCIMB 8711 / NCTC 7292 / S-41) protein is Phosphatidylglycerol--prolipoprotein diacylglyceryl transferase.